A 336-amino-acid polypeptide reads, in one-letter code: UPF0324 membrane protein PM1461 (336 aa).

Transmembrane regions (helical) follow at residues Thr-5–Leu-23, Leu-30–Tyr-52, Gly-62–Leu-84, Gly-91–Gly-113, Ile-123–Met-140, Val-153–Tyr-175, Met-221–Leu-238, Ile-250–Ile-271, Ile-275–Thr-297, and Pro-310–Ile-332.

The protein belongs to the UPF0324 family.

The protein resides in the cell membrane. In Pasteurella multocida (strain Pm70), this protein is UPF0324 membrane protein PM1461.